Here is a 160-residue protein sequence, read N- to C-terminus: Serine-protein kinase RsbW (160 aa).

This sequence belongs to the anti-sigma-factor family.

The catalysed reaction is L-seryl-[protein] + ATP = O-phospho-L-seryl-[protein] + ADP + H(+). It carries out the reaction L-threonyl-[protein] + ATP = O-phospho-L-threonyl-[protein] + ADP + H(+). Negative regulator of sigma-B activity. Phosphorylates and inactivates its specific antagonist protein, RsbV. Upon phosphorylation of RsbV, RsbW is released and binds to sigma-B, thereby blocking its ability to form an RNA polymerase holoenzyme (E-sigma-B). This chain is Serine-protein kinase RsbW, found in Bacillus cereus (strain ATCC 10987 / NRS 248).